Reading from the N-terminus, the 200-residue chain is Recombination protein RecR (200 aa).

The C4-type zinc-finger motif lies at 60–75; that stretch reads CVYCQALTEDDVCNIC. In terms of domain architecture, Toprim spans 83-177; that stretch reads TKLCIIESML…KISRIGFGVP (95 aa).

The protein belongs to the RecR family.

Its function is as follows. May play a role in DNA repair. It seems to be involved in an RecBC-independent recombinational process of DNA repair. It may act with RecF and RecO. This is Recombination protein RecR from Francisella tularensis subsp. tularensis (strain SCHU S4 / Schu 4).